The following is an 82-amino-acid chain: Cytochrome b-c1 complex subunit 8 (82 aa).

Residues 2-39 (GRQFGHLTRVRHVITYSLSPFEQRAFPHYFSKGIPNVL) lie on the Mitochondrial matrix side of the membrane. The residue at position 33 (Lys33) is an N6-acetyllysine; alternate. Position 33 is an N6-succinyllysine; alternate (Lys33). A helical membrane pass occupies residues 40–68 (RRTRACILRVAPPFVAFYLVYTWGTQEFE). Topologically, residues 69-82 (KSKRKNPAAYENDR) are mitochondrial intermembrane.

It belongs to the UQCRQ/QCR8 family. In terms of assembly, component of the ubiquinol-cytochrome c oxidoreductase (cytochrome b-c1 complex, complex III, CIII), a multisubunit enzyme composed of 11 subunits. The complex is composed of 3 respiratory subunits cytochrome b, cytochrome c1 and Rieske protein UQCRFS1, 2 core protein subunits UQCRC1/QCR1 and UQCRC2/QCR2, and 6 low-molecular weight protein subunits UQCRH/QCR6, UQCRB/QCR7, UQCRQ/QCR8, UQCR10/QCR9, UQCR11/QCR10 and subunit 9, the cleavage product of Rieske protein UQCRFS1. The complex exists as an obligatory dimer and forms supercomplexes (SCs) in the inner mitochondrial membrane with NADH-ubiquinone oxidoreductase (complex I, CI) and cytochrome c oxidase (complex IV, CIV), resulting in different assemblies (supercomplex SCI(1)III(2)IV(1) and megacomplex MCI(2)III(2)IV(2)). Interacts with UQCC6.

It localises to the mitochondrion inner membrane. In terms of biological role, component of the ubiquinol-cytochrome c oxidoreductase, a multisubunit transmembrane complex that is part of the mitochondrial electron transport chain which drives oxidative phosphorylation. The respiratory chain contains 3 multisubunit complexes succinate dehydrogenase (complex II, CII), ubiquinol-cytochrome c oxidoreductase (cytochrome b-c1 complex, complex III, CIII) and cytochrome c oxidase (complex IV, CIV), that cooperate to transfer electrons derived from NADH and succinate to molecular oxygen, creating an electrochemical gradient over the inner membrane that drives transmembrane transport and the ATP synthase. The cytochrome b-c1 complex catalyzes electron transfer from ubiquinol to cytochrome c, linking this redox reaction to translocation of protons across the mitochondrial inner membrane, with protons being carried across the membrane as hydrogens on the quinol. In the process called Q cycle, 2 protons are consumed from the matrix, 4 protons are released into the intermembrane space and 2 electrons are passed to cytochrome c. The protein is Cytochrome b-c1 complex subunit 8 (UQCRQ) of Bos taurus (Bovine).